Consider the following 363-residue polypeptide: Chorismate synthase (363 aa).

The NADP(+) site is built by arginine 48 and arginine 54. FMN contacts are provided by residues 125–127 (RSS), 237–238 (NA), glycine 277, 292–296 (KPTSS), and arginine 318.

It belongs to the chorismate synthase family. As to quaternary structure, homotetramer. FMNH2 serves as cofactor.

It carries out the reaction 5-O-(1-carboxyvinyl)-3-phosphoshikimate = chorismate + phosphate. Its pathway is metabolic intermediate biosynthesis; chorismate biosynthesis; chorismate from D-erythrose 4-phosphate and phosphoenolpyruvate: step 7/7. Functionally, catalyzes the anti-1,4-elimination of the C-3 phosphate and the C-6 proR hydrogen from 5-enolpyruvylshikimate-3-phosphate (EPSP) to yield chorismate, which is the branch point compound that serves as the starting substrate for the three terminal pathways of aromatic amino acid biosynthesis. This reaction introduces a second double bond into the aromatic ring system. This chain is Chorismate synthase, found in Pseudomonas fluorescens (strain Pf0-1).